The sequence spans 397 residues: Elongation factor Tu (397 aa).

Positions 10 to 207 constitute a tr-type G domain; the sequence is KPHCNIGTIG…AVDEWIPQPE (198 aa). Residues 19 to 26 form a G1 region; that stretch reads GHVDHGKT. A GTP-binding site is contributed by 19-26; it reads GHVDHGKT. Residue T26 participates in Mg(2+) binding. The G2 stretch occupies residues 61 to 65; it reads GITIS. Residues 82–85 are G3; the sequence is DCPG. GTP contacts are provided by residues 82–86 and 137–140; these read DCPGH and NKVD. The interval 137–140 is G4; it reads NKVD. The interval 175 to 177 is G5; the sequence is SAL.

The protein belongs to the TRAFAC class translation factor GTPase superfamily. Classic translation factor GTPase family. EF-Tu/EF-1A subfamily. As to quaternary structure, monomer.

It is found in the cytoplasm. It carries out the reaction GTP + H2O = GDP + phosphate + H(+). Its function is as follows. GTP hydrolase that promotes the GTP-dependent binding of aminoacyl-tRNA to the A-site of ribosomes during protein biosynthesis. The chain is Elongation factor Tu from Sphingopyxis alaskensis (strain DSM 13593 / LMG 18877 / RB2256) (Sphingomonas alaskensis).